Here is a 337-residue protein sequence, read N- to C-terminus: MAGQSPPVLGVGLIGSGSAQAAQVISNDQLSQRVDTNDEWIRTRTGIGRRRVSTADQTLVDLAAEAGRSALTMAGRSPQDLDLILLATSTPDDLFGSAPRVQAELGATNAVAFDLTAACSGFLFALVTAAQYLRTGAMRRALVIGADQLSRFVDWDDRRSCVLFGDGAGAVVLEASDEDGLLGFLLHSDGARGAVLNLPANDTSAPLIAGAEHRAGGYRPIVMNGQEVYKFAVREVPAVLQSLLKRCDVSADQLDWLLLHQANQRILDAVADRLSVPGAKVLSNLAAYGNTSAATIPLMLDEAVRDGRVSSGDLLASSGFGAGLSWGAALLRWQGPT.

Active-site residues include C119 and H260. An ACP-binding region spans residues 261 to 265 (QANQR). N290 is an active-site residue.

It belongs to the thiolase-like superfamily. FabH family. As to quaternary structure, homodimer.

The protein localises to the cytoplasm. It carries out the reaction malonyl-[ACP] + acetyl-CoA + H(+) = 3-oxobutanoyl-[ACP] + CO2 + CoA. Its pathway is lipid metabolism; fatty acid biosynthesis. Catalyzes the condensation reaction of fatty acid synthesis by the addition to an acyl acceptor of two carbons from malonyl-ACP. Catalyzes the first condensation reaction which initiates fatty acid synthesis and may therefore play a role in governing the total rate of fatty acid production. Possesses both acetoacetyl-ACP synthase and acetyl transacylase activities. Its substrate specificity determines the biosynthesis of branched-chain and/or straight-chain of fatty acids. The sequence is that of Beta-ketoacyl-[acyl-carrier-protein] synthase III from Synechococcus sp. (strain WH7803).